Here is a 202-residue protein sequence, read N- to C-terminus: MRNVSMTERIIEVVRNTNETKIRVRLNLDGSGQGTLNTGVPFLDHMIDQIKRHGLFDIDIHCDGDLEIDDHHTVEDCGITLGQAFAQALGDKKGLRRYGHFYAPLDESLSRVVVDLSGRPGLFMDIPFTRARIGSFDVDLFSEFFQGFVNHALMTLHIDNLKGKNSHHQIESVFKAFARALRMACEIDPRAAGSIASTKGSL.

This sequence belongs to the imidazoleglycerol-phosphate dehydratase family.

The protein localises to the cytoplasm. It carries out the reaction D-erythro-1-(imidazol-4-yl)glycerol 3-phosphate = 3-(imidazol-4-yl)-2-oxopropyl phosphate + H2O. Its pathway is amino-acid biosynthesis; L-histidine biosynthesis; L-histidine from 5-phospho-alpha-D-ribose 1-diphosphate: step 6/9. In Acinetobacter baylyi (strain ATCC 33305 / BD413 / ADP1), this protein is Imidazoleglycerol-phosphate dehydratase.